We begin with the raw amino-acid sequence, 156 residues long: Ecotin (156 aa).

The signal sequence occupies residues 1–19; that stretch reads MKALLIAAGVAALSSTAMA. Cysteines 65 and 102 form a disulfide.

It belongs to the protease inhibitor I11 (ecotin) family. As to quaternary structure, homodimer.

Its subcellular location is the periplasm. Functionally, general inhibitor of family S1 serine proteases. The sequence is that of Ecotin from Pseudomonas aeruginosa (strain ATCC 15692 / DSM 22644 / CIP 104116 / JCM 14847 / LMG 12228 / 1C / PRS 101 / PAO1).